Consider the following 459-residue polypeptide: UDP-N-acetylmuramoyl-tripeptide--D-alanyl-D-alanine ligase (459 aa).

ATP is bound at residue 121-127; that stretch reads GSSGKTT.

It belongs to the MurCDEF family. MurF subfamily.

It is found in the cytoplasm. The enzyme catalyses D-alanyl-D-alanine + UDP-N-acetyl-alpha-D-muramoyl-L-alanyl-gamma-D-glutamyl-meso-2,6-diaminopimelate + ATP = UDP-N-acetyl-alpha-D-muramoyl-L-alanyl-gamma-D-glutamyl-meso-2,6-diaminopimeloyl-D-alanyl-D-alanine + ADP + phosphate + H(+). It functions in the pathway cell wall biogenesis; peptidoglycan biosynthesis. Involved in cell wall formation. Catalyzes the final step in the synthesis of UDP-N-acetylmuramoyl-pentapeptide, the precursor of murein. This chain is UDP-N-acetylmuramoyl-tripeptide--D-alanyl-D-alanine ligase, found in Treponema pallidum (strain Nichols).